Here is a 471-residue protein sequence, read N- to C-terminus: Siroheme synthase 1 (471 aa).

The segment at 1-203 is precorrin-2 dehydrogenase /sirohydrochlorin ferrochelatase; the sequence is MDYLPLFAEL…GNSAEAEKAL (203 aa). Residues 22 to 23 and 43 to 44 contribute to the NAD(+) site; these read EI and ET. Phosphoserine is present on Ser-128. The tract at residues 215-471 is uroporphyrinogen-III C-methyltransferase; that stretch reads GEIILVGAGP…GFNASVVNLA (257 aa). Pro-224 lines the S-adenosyl-L-methionine pocket. The Proton acceptor role is filled by Asp-247. Lys-269 acts as the Proton donor in catalysis. S-adenosyl-L-methionine contacts are provided by residues 300–302, Ile-305, 330–331, Met-382, and Gly-411; these read GGD and TA.

In the N-terminal section; belongs to the precorrin-2 dehydrogenase / sirohydrochlorin ferrochelatase family. The protein in the C-terminal section; belongs to the precorrin methyltransferase family.

The enzyme catalyses uroporphyrinogen III + 2 S-adenosyl-L-methionine = precorrin-2 + 2 S-adenosyl-L-homocysteine + H(+). The catalysed reaction is precorrin-2 + NAD(+) = sirohydrochlorin + NADH + 2 H(+). It catalyses the reaction siroheme + 2 H(+) = sirohydrochlorin + Fe(2+). It functions in the pathway cofactor biosynthesis; adenosylcobalamin biosynthesis; precorrin-2 from uroporphyrinogen III: step 1/1. Its pathway is cofactor biosynthesis; adenosylcobalamin biosynthesis; sirohydrochlorin from precorrin-2: step 1/1. It participates in porphyrin-containing compound metabolism; siroheme biosynthesis; precorrin-2 from uroporphyrinogen III: step 1/1. The protein operates within porphyrin-containing compound metabolism; siroheme biosynthesis; siroheme from sirohydrochlorin: step 1/1. It functions in the pathway porphyrin-containing compound metabolism; siroheme biosynthesis; sirohydrochlorin from precorrin-2: step 1/1. Its function is as follows. Multifunctional enzyme that catalyzes the SAM-dependent methylations of uroporphyrinogen III at position C-2 and C-7 to form precorrin-2 via precorrin-1. Then it catalyzes the NAD-dependent ring dehydrogenation of precorrin-2 to yield sirohydrochlorin. Finally, it catalyzes the ferrochelation of sirohydrochlorin to yield siroheme. In Klebsiella pneumoniae subsp. pneumoniae (strain ATCC 700721 / MGH 78578), this protein is Siroheme synthase 1.